The sequence spans 508 residues: MGLPWYRVHTVVLNDPGRLLSVHIMHTALVAGWAGSMALYELAVFDPSDPVLDPMWRQGMFVIPFMTRLGITNSWGGWNITGGTITNPGLWSYEGVAAAHIVFSGLCFLAAIWHWVYWDLEIFCDERTGKPSLDLPKIFGIHLFLSGVACFGFGAFHVTGLYGPGIWVSDPYGLTGKVQPVNPAWGVEGFDPFVPGGIASHHIAAGTLGILAGLFHLSVRPPQRLYKGLRMGNIETVLSSSIAAVFFAAFVVAGTMWYGSATTPIELFGPTRYQWDQGYFQQEIYRRVSAGLAENQSLSEAWAKIPEKLAFYDYIGNNPAKGGLFRAGSMDNGDGIAVGWLGHPVFRNKEGRELFVRRMPTFFETFPVVLVDGDGIVRADVPFRRAESKYSVEQVGVTVEFYGGELNGVSYSDPATVKKYARRAQLGEIFELDRATLKSDGVFRSSPRGWFTFGHASFALLFFFGHIWHGSRTLFRDVFAGIDPDLDAQVEFGAFQKLGDPTTKRQAV.

The next 6 membrane-spanning stretches (helical) occupy residues 21–36, 101–115, 140–156, 203–218, 237–252, and 457–472; these read SVHI…WAGS, IVFS…IWHW, GIHL…FGAF, IAAG…FHLS, VLSS…AFVV, and SFAL…HGSR.

The protein belongs to the PsbB/PsbC family. PsbB subfamily. PSII is composed of 1 copy each of membrane proteins PsbA, PsbB, PsbC, PsbD, PsbE, PsbF, PsbH, PsbI, PsbJ, PsbK, PsbL, PsbM, PsbT, PsbX, PsbY, PsbZ, Psb30/Ycf12, at least 3 peripheral proteins of the oxygen-evolving complex and a large number of cofactors. It forms dimeric complexes. Binds multiple chlorophylls. PSII binds additional chlorophylls, carotenoids and specific lipids. serves as cofactor.

The protein localises to the plastid. Its subcellular location is the chloroplast thylakoid membrane. Functionally, one of the components of the core complex of photosystem II (PSII). It binds chlorophyll and helps catalyze the primary light-induced photochemical processes of PSII. PSII is a light-driven water:plastoquinone oxidoreductase, using light energy to abstract electrons from H(2)O, generating O(2) and a proton gradient subsequently used for ATP formation. This Capsella bursa-pastoris (Shepherd's purse) protein is Photosystem II CP47 reaction center protein.